The following is a 258-amino-acid chain: Alcohol dehydrogenase 2 (258 aa).

Ile-9–Phe-33 lines the NAD(+) pocket. Position 137 (Ser-137) interacts with substrate. The active-site Proton acceptor is Tyr-150.

Belongs to the short-chain dehydrogenases/reductases (SDR) family. Homodimer.

The enzyme catalyses a primary alcohol + NAD(+) = an aldehyde + NADH + H(+). It catalyses the reaction a secondary alcohol + NAD(+) = a ketone + NADH + H(+). In Ceratitis rosa (Natal fruit fly), this protein is Alcohol dehydrogenase 2 (ADH2).